The primary structure comprises 258 residues: Probable parvulin-type peptidyl-prolyl cis-trans isomerase (258 aa).

Residues 1–19 (MKRIAMLAAACVIAVPAFA) form the signal peptide. A PpiC domain is found at 127–219 (KMEYKVRHIL…FGWHVIQVDD (93 aa)). Positions 158–175 (DDLAKKNSKDPGSAERGG) are enriched in basic and acidic residues. Positions 158 to 178 (DDLAKKNSKDPGSAERGGDLG) are disordered.

Belongs to the PpiC/parvulin rotamase family.

It carries out the reaction [protein]-peptidylproline (omega=180) = [protein]-peptidylproline (omega=0). The sequence is that of Probable parvulin-type peptidyl-prolyl cis-trans isomerase from Bordetella bronchiseptica (strain ATCC BAA-588 / NCTC 13252 / RB50) (Alcaligenes bronchisepticus).